The primary structure comprises 192 residues: Fibroblast growth factor 4B (192 aa).

The N-terminal stretch at 1 to 22 is a signal peptide; that stretch reads MTVQLALVPILLLGTAAVMVHC.

Belongs to the heparin-binding growth factors family.

It is found in the secreted. Plays an important role in the regulation of embryonic development, cell proliferation, and cell differentiation. Good candidate for an inducing factor with possible roles both in mesoderm induction at the blastula stage and in the formation of the anteroposterior axis at the gastrula stage. The chain is Fibroblast growth factor 4B (fgf4-b) from Xenopus laevis (African clawed frog).